Reading from the N-terminus, the 142-residue chain is Hemoglobin subunit alpha-1 (142 aa).

The Globin domain occupies 2–142; it reads VLSPADKTNI…VSTVLTSKYR (141 aa). H59 contributes to the O2 binding site. H88 lines the heme b pocket.

It belongs to the globin family. In terms of assembly, heterotetramer of two alpha chains and two beta chains. In terms of tissue distribution, red blood cells.

In terms of biological role, involved in oxygen transport from the lung to the various peripheral tissues. The sequence is that of Hemoglobin subunit alpha-1 from Arctocephalus galapagoensis (Galapagoes fur seal).